Here is an 86-residue protein sequence, read N- to C-terminus: uncharacterized protein (86 aa).

TPR repeat units lie at residues 8–41 (AEYY…NPFY) and 42–75 (RDAW…EKHL).

This is an uncharacterized protein from Methanocaldococcus jannaschii (strain ATCC 43067 / DSM 2661 / JAL-1 / JCM 10045 / NBRC 100440) (Methanococcus jannaschii).